Reading from the N-terminus, the 36-residue chain is Photosystem I reaction center subunit VIII (36 aa).

Residues 9–29 (ILVPLVGLVFPAIAMASLFLY) form a helical membrane-spanning segment.

Belongs to the PsaI family.

The protein localises to the plastid. It localises to the chloroplast thylakoid membrane. Its function is as follows. May help in the organization of the PsaL subunit. This Oltmannsiellopsis viridis (Marine flagellate) protein is Photosystem I reaction center subunit VIII.